A 138-amino-acid chain; its full sequence is uncharacterized protein (138 aa).

The segment at residues Leu17–Lys38 is a DNA-binding region (H-T-H motif).

This is an uncharacterized protein from Herpetosiphon aurantiacus (Herpetosiphon giganteus).